A 730-amino-acid chain; its full sequence is Replication restart protein PriA (730 aa).

The region spanning 212 to 378 (LLFHSGFNVW…QNGKYQHLVL (167 aa)) is the Helicase ATP-binding domain. 225–232 (GVTGSGKT) lines the ATP pocket. The short motif at 321-324 (DEEH) is the DEAH box element. Zn(2+)-binding residues include Cys437, Cys440, Cys446, Cys449, Cys464, Cys467, Cys477, and Cys480. The Helicase C-terminal domain maps to 472–640 (TIPRQCGDCG…LPPFTFQALI (169 aa)).

Belongs to the helicase family. PriA subfamily. Component of the replication restart primosome. Zn(2+) is required as a cofactor.

The enzyme catalyses Couples ATP hydrolysis with the unwinding of duplex DNA by translocating in the 3'-5' direction.. The catalysed reaction is ATP + H2O = ADP + phosphate + H(+). Initiates the restart of stalled replication forks, which reloads the replicative helicase on sites other than the origin of replication. Recognizes and binds to abandoned replication forks and remodels them to uncover a helicase loading site. Promotes assembly of the primosome at these replication forks. The protein is Replication restart protein PriA of Haemophilus influenzae (strain ATCC 51907 / DSM 11121 / KW20 / Rd).